The primary structure comprises 530 residues: FSD1-like protein (530 aa).

An N-acetylmethionine modification is found at Met1. The stretch at 102–141 (KQEQARKSQELQSQISQCNNALENSEELLEFATRSLDIKE) forms a coiled coil. The COS domain occupies 137-194 (LDIKEPEEFSKAARQIKDRVTMASAFRLSLKPKVSDNMTHLMVDFSQERQMLQTLKFL). Positions 196 to 300 (VPKAPEIDPV…DPVTLETKAL (105 aa)) constitute a Fibronectin type-III domain. Residues 300–506 (LNFNLDNSSS…LSTGMQVPSA (207 aa)) form the B30.2/SPRY domain. Positions 322 to 366 (WDPTGGKGQESKIKGKENKGRSGTPSPKRTSVGSRPPAVRGSRDR) are disordered. Residues 330–341 (QESKIKGKENKG) show a composition bias toward basic and acidic residues. Polar residues predominate over residues 342-354 (RSGTPSPKRTSVG). Phosphoserine occurs at positions 520 and 523.

The chain is FSD1-like protein (FSD1L) from Homo sapiens (Human).